The sequence spans 334 residues: S-adenosylmethionine decarboxylase proenzyme (334 aa).

A substrate-binding site is contributed by phenylalanine 7. Catalysis depends on residues glutamate 8 and glutamate 11. Glutamate 67 contributes to the substrate binding site. Catalysis depends on serine 68, which acts as the Schiff-base intermediate with substrate; via pyruvic acid. Serine 68 bears the Pyruvic acid (Ser); by autocatalysis mark. Cysteine 82 acts as the Proton donor; for catalytic activity in catalysis. Phenylalanine 223 is a substrate binding site. Catalysis depends on proton acceptor; for processing activity residues serine 229 and histidine 243. A substrate-binding site is contributed by glutamate 247. Position 298 is a phosphoserine (serine 298).

Belongs to the eukaryotic AdoMetDC family. In terms of assembly, heterotetramer of two alpha and two beta chains. Pyruvate is required as a cofactor. In terms of processing, is synthesized initially as an inactive proenzyme. Formation of the active enzyme involves a self-maturation process in which the active site pyruvoyl group is generated from an internal serine residue via an autocatalytic post-translational modification. Two non-identical subunits are generated from the proenzyme in this reaction, and the pyruvate is formed at the N-terminus of the alpha chain, which is derived from the carboxyl end of the proenzyme. The post-translation cleavage follows an unusual pathway, termed non-hydrolytic serinolysis, in which the side chain hydroxyl group of the serine supplies its oxygen atom to form the C-terminus of the beta chain, while the remainder of the serine residue undergoes an oxidative deamination to produce ammonia and the pyruvoyl group blocking the N-terminus of the alpha chain.

It catalyses the reaction S-adenosyl-L-methionine + H(+) = S-adenosyl 3-(methylsulfanyl)propylamine + CO2. The protein operates within amine and polyamine biosynthesis; S-adenosylmethioninamine biosynthesis; S-adenosylmethioninamine from S-adenosyl-L-methionine: step 1/1. Its function is as follows. Essential for biosynthesis of the polyamines spermidine and spermine. Promotes maintenance and self-renewal of embryonic stem cells, by maintaining spermine levels. The chain is S-adenosylmethionine decarboxylase proenzyme (AMD1) from Mesocricetus auratus (Golden hamster).